Reading from the N-terminus, the 332-residue chain is Probable endo-beta-1,4-glucanase B (332 aa).

Residues 1–18 (MKFQSTLLLAAAAGSALA) form the signal peptide. N-linked (GlcNAc...) asparagine glycans are attached at residues Asn38 and Asn100. Glu160 functions as the Proton donor in the catalytic mechanism. N-linked (GlcNAc...) asparagine glycosylation occurs at Asn212. Glu267 serves as the catalytic Nucleophile. N-linked (GlcNAc...) asparagine glycosylation occurs at Asn289.

The protein belongs to the glycosyl hydrolase 5 (cellulase A) family.

The protein localises to the secreted. The enzyme catalyses Endohydrolysis of (1-&gt;4)-beta-D-glucosidic linkages in cellulose, lichenin and cereal beta-D-glucans.. Its function is as follows. Has endoglucanase activity on substrates containing beta-1,4 glycosidic bonds, like in carboxymethylcellulose (CMC), hydroxyethylcellulose (HEC) and beta-glucan. Involved in the degradation of complex natural cellulosic substrates. The sequence is that of Probable endo-beta-1,4-glucanase B (eglB) from Aspergillus kawachii (strain NBRC 4308) (White koji mold).